The primary structure comprises 363 residues: 3-isopropylmalate dehydrogenase (363 aa).

78–91 (GPKWEHLPPDQQPE) contributes to the NAD(+) binding site. 4 residues coordinate substrate: R99, R109, R138, and D227. 3 residues coordinate Mg(2+): D227, D251, and D255. Position 285 to 297 (285 to 297 (GSAPDIAGKNIAN)) interacts with NAD(+).

This sequence belongs to the isocitrate and isopropylmalate dehydrogenases family. LeuB type 1 subfamily. Homodimer. Mg(2+) serves as cofactor. The cofactor is Mn(2+).

Its subcellular location is the cytoplasm. The catalysed reaction is (2R,3S)-3-isopropylmalate + NAD(+) = 4-methyl-2-oxopentanoate + CO2 + NADH. It participates in amino-acid biosynthesis; L-leucine biosynthesis; L-leucine from 3-methyl-2-oxobutanoate: step 3/4. Catalyzes the oxidation of 3-carboxy-2-hydroxy-4-methylpentanoate (3-isopropylmalate) to 3-carboxy-4-methyl-2-oxopentanoate. The product decarboxylates to 4-methyl-2 oxopentanoate. The protein is 3-isopropylmalate dehydrogenase of Shigella sonnei (strain Ss046).